The primary structure comprises 175 residues: Small ribosomal subunit protein uS9 (175 aa).

It belongs to the universal ribosomal protein uS9 family.

The chain is Small ribosomal subunit protein uS9 from Streptomyces griseus subsp. griseus (strain JCM 4626 / CBS 651.72 / NBRC 13350 / KCC S-0626 / ISP 5235).